We begin with the raw amino-acid sequence, 190 residues long: Somatotropin (190 aa).

Residue His19 participates in Zn(2+) binding. A disulfide bond links Cys52 and Cys163. Ser105 is modified (phosphoserine). Zn(2+) is bound at residue Glu172. Residues Cys180 and Cys188 are joined by a disulfide bond.

The protein belongs to the somatotropin/prolactin family.

It localises to the secreted. Plays an important role in growth control. Its major role in stimulating body growth is to stimulate the liver and other tissues to secrete IGF1. It stimulates both the differentiation and proliferation of myoblasts. It also stimulates amino acid uptake and protein synthesis in muscle and other tissues. The sequence is that of Somatotropin (GH1) from Balaenoptera borealis (Sei whale).